Consider the following 433-residue polypeptide: Enolase (433 aa).

Residue Gln-167 participates in (2R)-2-phosphoglycerate binding. Glu-209 serves as the catalytic Proton donor. Positions 246, 291, and 318 each coordinate Mg(2+). 4 residues coordinate (2R)-2-phosphoglycerate: Lys-343, Arg-372, Ser-373, and Lys-394. Lys-343 acts as the Proton acceptor in catalysis.

The protein belongs to the enolase family. In terms of assembly, component of the RNA degradosome, a multiprotein complex involved in RNA processing and mRNA degradation. It depends on Mg(2+) as a cofactor.

It is found in the cytoplasm. Its subcellular location is the secreted. It localises to the cell surface. It catalyses the reaction (2R)-2-phosphoglycerate = phosphoenolpyruvate + H2O. It participates in carbohydrate degradation; glycolysis; pyruvate from D-glyceraldehyde 3-phosphate: step 4/5. Functionally, catalyzes the reversible conversion of 2-phosphoglycerate (2-PG) into phosphoenolpyruvate (PEP). It is essential for the degradation of carbohydrates via glycolysis. This is Enolase from Vibrio vulnificus (strain CMCP6).